The following is a 161-amino-acid chain: Arachidonate 5-lipoxygenase-activating protein (161 aa).

The Lumenal segment spans residues 1 to 8 (MDQETVGN). The chain crosses the membrane as a helical span at residues 9-30 (VVLLAIVTLISVVQNGFFAHKV). The Cytoplasmic portion of the chain corresponds to 31–52 (EHESRTQNGRSFQRTGTLAFER). Residues 53–77 (VYTANQNCVDAYPTFLAVLWSAGLL) traverse the membrane as a helical segment. The Lumenal segment spans residues 78–80 (CSQ). Residues 81–102 (VPAAFAGLMYLFVRQKYFVGYL) form a helical membrane-spanning segment. Over 103 to 107 (GERTQ) the chain is Cytoplasmic. Residues 108 to 115 (STPGYIFG) lie within the membrane without spanning it. The helical transmembrane segment at 116-128 (KRIILFLFLMSVA) threads the bilayer. At 129–161 (GIFNYYLIFFFGSDFENYIKTISTTISPLLLIP) the chain is on the lumenal side.

Belongs to the MAPEG family. As to quaternary structure, homotrimer. Interacts with LTC4S and ALOX5.

The protein localises to the nucleus membrane. Its subcellular location is the endoplasmic reticulum membrane. Functionally, required for leukotriene biosynthesis by ALOX5 (5-lipoxygenase). Anchors ALOX5 to the membrane. Binds arachidonic acid, and could play an essential role in the transfer of arachidonic acid to ALOX5. Binds to MK-886, a compound that blocks the biosynthesis of leukotrienes. This chain is Arachidonate 5-lipoxygenase-activating protein (ALOX5AP), found in Homo sapiens (Human).